Consider the following 597-residue polypeptide: Aspartate--tRNA ligase (597 aa).

E173 contributes to the L-aspartate binding site. The interval 197-200 (QLFK) is aspartate. R219 provides a ligand contact to L-aspartate. ATP contacts are provided by residues 219 to 221 (RDE) and Q228. Position 449 (H449) interacts with L-aspartate. ATP is bound at residue E483. L-aspartate is bound at residue R490. 535 to 538 (GLDR) lines the ATP pocket.

The protein belongs to the class-II aminoacyl-tRNA synthetase family. Type 1 subfamily. As to quaternary structure, homodimer.

Its subcellular location is the cytoplasm. The enzyme catalyses tRNA(Asp) + L-aspartate + ATP = L-aspartyl-tRNA(Asp) + AMP + diphosphate. In terms of biological role, catalyzes the attachment of L-aspartate to tRNA(Asp) in a two-step reaction: L-aspartate is first activated by ATP to form Asp-AMP and then transferred to the acceptor end of tRNA(Asp). The sequence is that of Aspartate--tRNA ligase from Shewanella pealeana (strain ATCC 700345 / ANG-SQ1).